The chain runs to 566 residues: UvrABC system protein C (566 aa).

Positions 16–93 (EKPGVYLFKK…IQQYKPRYNV (78 aa)) constitute a GIY-YIG domain. The region spanning 199–234 (AEVLPKLYEKIEEFSKELMFEKCAHIRDQIIALENL) is the UVR domain.

Belongs to the UvrC family. Interacts with UvrB in an incision complex.

Its subcellular location is the cytoplasm. Its function is as follows. The UvrABC repair system catalyzes the recognition and processing of DNA lesions. UvrC both incises the 5' and 3' sides of the lesion. The N-terminal half is responsible for the 3' incision and the C-terminal half is responsible for the 5' incision. This chain is UvrABC system protein C, found in Aquifex aeolicus (strain VF5).